A 141-amino-acid polypeptide reads, in one-letter code: Large ribosomal subunit protein uL11 (141 aa).

It belongs to the universal ribosomal protein uL11 family. As to quaternary structure, part of the ribosomal stalk of the 50S ribosomal subunit. Interacts with L10 and the large rRNA to form the base of the stalk. L10 forms an elongated spine to which L12 dimers bind in a sequential fashion forming a multimeric L10(L12)X complex. Post-translationally, one or more lysine residues are methylated.

In terms of biological role, forms part of the ribosomal stalk which helps the ribosome interact with GTP-bound translation factors. The polypeptide is Large ribosomal subunit protein uL11 (Parasynechococcus marenigrum (strain WH8102)).